A 315-amino-acid chain; its full sequence is MNQEYLDFELPIAELEAKIEALRAASDDKVDLTDEIKRLQKKSNELTKKTFANLDAWQVSRMARHPNRPYTLDYIEHIFTEFEELAGDRAFADDKAIVGGLARLDGRPVMVIGHQKGRSVKEKVQRNFGMPAPEGYRKALRLMEMAERFKLPIITFIDTPGAYPGIGAEERGQAEAIARNLREMAQLTVPVICTVIGEGGSGGALAIGVGDKVNMLQYSTYSVISPEGCASILWKSAEKASTAAEVMGLTASRLKELNLIDSIMQEPLGGAHRNYAKIAENLKLRLKEDLAELDELSKEELLNRRYERLMSYGYC.

A CoA carboxyltransferase C-terminal domain is found at 38–292; that stretch reads RLQKKSNELT…KLRLKEDLAE (255 aa).

It belongs to the AccA family. As to quaternary structure, acetyl-CoA carboxylase is a heterohexamer composed of biotin carboxyl carrier protein (AccB), biotin carboxylase (AccC) and two subunits each of ACCase subunit alpha (AccA) and ACCase subunit beta (AccD).

Its subcellular location is the cytoplasm. It carries out the reaction N(6)-carboxybiotinyl-L-lysyl-[protein] + acetyl-CoA = N(6)-biotinyl-L-lysyl-[protein] + malonyl-CoA. It functions in the pathway lipid metabolism; malonyl-CoA biosynthesis; malonyl-CoA from acetyl-CoA: step 1/1. In terms of biological role, component of the acetyl coenzyme A carboxylase (ACC) complex. First, biotin carboxylase catalyzes the carboxylation of biotin on its carrier protein (BCCP) and then the CO(2) group is transferred by the carboxyltransferase to acetyl-CoA to form malonyl-CoA. The polypeptide is Acetyl-coenzyme A carboxylase carboxyl transferase subunit alpha (Haemophilus influenzae (strain 86-028NP)).